We begin with the raw amino-acid sequence, 338 residues long: Putative peptide import ATP-binding protein BOV_A0348 (338 aa).

An ABC transporter domain is found at 10–263 (KGLRTVFRTR…PRHPYTMGLL (254 aa)). Residue 43–50 (GESGSGKS) participates in ATP binding.

Belongs to the ABC transporter superfamily. As to quaternary structure, the complex is composed of two ATP-binding proteins (BOV_A0347 and BOV_A0348), two transmembrane proteins (BOV_A0350 and BOV_A0351) and a solute-binding protein (BOV_A0352).

Its subcellular location is the cell inner membrane. Functionally, probably part of an ABC transporter complex that could be involved in peptide import. Probably responsible for energy coupling to the transport system. The sequence is that of Putative peptide import ATP-binding protein BOV_A0348 from Brucella ovis (strain ATCC 25840 / 63/290 / NCTC 10512).